Reading from the N-terminus, the 438-residue chain is Cysteine--tRNA ligase (438 aa).

C28 is a binding site for Zn(2+). Positions 30-40 (PTVYNHLHLGN) match the 'HIGH' region motif. Residues C207, H232, and E236 each coordinate Zn(2+). The 'KMSKS' region motif lies at 264–268 (KMSKS). K267 is an ATP binding site.

The protein belongs to the class-I aminoacyl-tRNA synthetase family. In terms of assembly, monomer. It depends on Zn(2+) as a cofactor.

It is found in the cytoplasm. The catalysed reaction is tRNA(Cys) + L-cysteine + ATP = L-cysteinyl-tRNA(Cys) + AMP + diphosphate. The sequence is that of Cysteine--tRNA ligase from Aster yellows witches'-broom phytoplasma (strain AYWB).